A 413-amino-acid chain; its full sequence is Multidrug resistance protein MdtA (413 aa).

A signal peptide spans M1–A20. 2 disordered regions span residues S31–P57 and E391–A413. Over residues A397–A413 the composition is skewed to basic and acidic residues.

The protein belongs to the membrane fusion protein (MFP) (TC 8.A.1) family. As to quaternary structure, part of a tripartite efflux system composed of MdtA, MdtB and MdtC.

The protein localises to the cell inner membrane. This chain is Multidrug resistance protein MdtA, found in Salmonella typhimurium (strain LT2 / SGSC1412 / ATCC 700720).